The chain runs to 1801 residues: Laminin subunit beta-2 (1801 aa).

Positions 1–35 (MEWASGKPGRGRQGQPVPWELRLGLLLSVLAATLA) are cleaved as a signal peptide. One can recognise a Laminin N-terminal domain in the interval 46-285 (SRGSCYPATG…ALYELVIRGN (240 aa)). Asn251 is a glycosylation site (N-linked (GlcNAc...) asparagine). Intrachain disulfides connect Cys286-Cys295, Cys288-Cys313, Cys315-Cys324, Cys327-Cys347, Cys350-Cys359, Cys352-Cys377, Cys380-Cys389, Cys392-Cys410, Cys413-Cys426, Cys415-Cys441, Cys443-Cys452, Cys455-Cys470, Cys473-Cys487, Cys475-Cys494, Cys496-Cys505, Cys508-Cys522, Cys525-Cys537, Cys527-Cys544, and Cys546-Cys555. Laminin EGF-like domains lie at 286–349 (CFCY…ACRK), 350–412 (CECN…ACRP), 413–472 (CDCD…GCQR), and 473–524 (CQCN…GCRP). An N-linked (GlcNAc...) asparagine glycan is attached at Asn371. The Laminin EGF-like 5; truncated domain occupies 525-555 (CDCDVGGALDPQCDEATGQCPCRPHMIGRRC). Residues 564–780 (RPFLDHLTWE…LLISASSLVY (217 aa)) enclose the Laminin IV type B domain. Intrachain disulfides connect Cys786–Cys798, Cys788–Cys805, Cys807–Cys816, Cys819–Cys831, Cys834–Cys846, Cys836–Cys853, Cys855–Cys864, Cys867–Cys877, Cys880–Cys889, Cys882–Cys896, Cys899–Cys908, Cys911–Cys927, Cys930–Cys946, Cys932–Cys957, Cys959–Cys968, Cys971–Cys986, Cys989–Cys1003, Cys991–Cys1010, Cys1013–Cys1022, Cys1025–Cys1038, Cys1041–Cys1061, Cys1043–Cys1068, Cys1070–Cys1079, Cys1082–Cys1095, Cys1098–Cys1110, Cys1100–Cys1117, Cys1119–Cys1128, Cys1131–Cys1143, Cys1146–Cys1158, Cys1148–Cys1165, Cys1167–Cys1176, and Cys1179–Cys1190. 8 consecutive Laminin EGF-like domains span residues 786–833 (CQCD…GCQA), 834–879 (CQCS…NCRP), 880–929 (CVCN…QCRP), 930–988 (CPCP…RCQL), 989–1040 (CECS…SCHR), 1041–1097 (CTCN…GCQP), 1098–1145 (CACH…QCRA), and 1146–1192 (CDCD…ACHP). An N-linked (GlcNAc...) asparagine glycan is attached at Asn1088. Residues 1193–1412 (CHACFGDWDR…LSLTGVNELV (220 aa)) are domain II. A glycan (N-linked (GlcNAc...) asparagine) is linked at Asn1252. Positions 1259–1306 (AKLVEATEGLRHEIGKTTERLTQLEAELTDVQDENFNANHALSGLERD) form a coiled coil. 2 N-linked (GlcNAc...) asparagine glycosylation sites follow: Asn1311 and Asn1351. The interval 1413–1445 (CGAPGDAPCATSPCGGAGCRDEDGQPRCGGLGC) is domain alpha. Residues 1446 to 1801 (SGAAATADLA…LQVQIYNTCQ (356 aa)) form a domain I region. The stretch at 1475-1529 (GILSRVSETRRQAEEAQQRAQAALDKANASRGQVEQANQELRELIQNVKDFLSQE) forms a coiled coil. Residue Asn1502 is glycosylated (N-linked (GlcNAc...) asparagine). The residue at position 1535 (Ser1535) is a Phosphoserine. The stretch at 1576–1793 (LAHTMGDVRR…RSVLQAINLQ (218 aa)) forms a coiled coil. Over residues 1684–1694 (ASTAEETAGSA) the composition is skewed to low complexity. Residues 1684-1703 (ASTAEETAGSAQSRAREAEK) form a disordered region.

In terms of assembly, laminin is a complex glycoprotein, consisting of three different polypeptide chains (alpha, beta, gamma), which are bound to each other by disulfide bonds into a cross-shaped molecule comprising one long and three short arms with globules at each end. Beta-2 is a subunit of laminin-3 (laminin-121 or S-laminin), laminin-4 (laminin-221 or S-merosin), laminin-7 (laminin-321 or KS-laminin), laminin-9 (laminin-421), laminin-11 (laminin-521), laminin-14 (laminin-423) and laminin-15 (laminin-523). Found in the basement membranes (major component). S-laminin is concentrated in the synaptic cleft of the neuromuscular junction.

The protein resides in the secreted. It localises to the extracellular space. It is found in the extracellular matrix. The protein localises to the basement membrane. Binding to cells via a high affinity receptor, laminin is thought to mediate the attachment, migration and organization of cells into tissues during embryonic development by interacting with other extracellular matrix components. The chain is Laminin subunit beta-2 (Lamb2) from Rattus norvegicus (Rat).